A 543-amino-acid polypeptide reads, in one-letter code: Excitatory amino acid transporter 1 (543 aa).

The Cytoplasmic segment spans residues 1-47 (MTKSNGEEPRMGGRMERLQQGVRKRTLLAKKKVQSLTKEDVKSYLFR). Residues 48–68 (NAFVLLTVTAVIVGTILGFAL) traverse the membrane as a helical segment. Topologically, residues 69–86 (RPYKMSYREVKYFSFPGE) are extracellular. A helical membrane pass occupies residues 87–108 (LLMRMLQMLVLPLIISSLVTGM). The Cytoplasmic segment spans residues 109–122 (AALDSKASGKMGMR). The helical transmembrane segment at 123 to 145 (AVVYYMTTTIIAVVIGIIIVIII) threads the bilayer. At 146–236 (HPGKGTKENM…IREEMVPVPG (91 aa)) the chain is on the extracellular side. Residues Asn-206 and Asn-216 are each glycosylated (N-linked (GlcNAc...) asparagine). The chain crosses the membrane as a helical span at residues 237–260 (SVNGVNALGLVVFSMCFGFVIGNM). Residues 261-269 (KEQGQALRE) lie on the Cytoplasmic side of the membrane. The chain crosses the membrane as a helical span at residues 270–297 (FFDSLNEAIMRLVAVIMWYAPLGILFLI). The Extracellular portion of the chain corresponds to 298-318 (AGKIVEMEDMGVIGGQLAMYT). The helical transmembrane segment at 319–340 (VTVIVGLLIHAVIVLPLLYFLV) threads the bilayer. Over 341–345 (TRKNP) the chain is Cytoplasmic. An intramembrane region (discontinuously helical) is located at residues 346-376 (WVFIGGLLQALITALGTSSSSATLPITFKCL). Position 363–365 (363–365 (SSS)) interacts with L-aspartate. Residues 377–385 (EENNGVDKR) are Cytoplasmic-facing. A helical transmembrane segment spans residues 386–412 (ITRFVLPVGATINMDGTALYEALAAIF). 3 residues coordinate Na(+): Gly-394, Thr-396, and Asn-398. Residue Thr-402 coordinates L-aspartate. Residues 413 to 425 (IAQVNNFDLNFGQ) are Extracellular-facing. Residues 426 to 459 (IITISITATAASIGAAGIPQAGLVTMVIVLTSVG) constitute an intramembrane region (discontinuously helical). Residue 443–447 (IPQAG) coordinates L-aspartate. The Extracellular segment spans residues 460–472 (LPTDDITLIIAVD). A helical membrane pass occupies residues 473-494 (WFLDRLRTTTNVLGDSLGAGIV). The L-aspartate site is built by Asp-476 and Asn-483. Na(+)-binding residues include Asn-483 and Asp-487. At 495–543 (EHLSRHELKNRDVEMGNSVIEENEMKKPYQLIAQDNEPEKPVADSETKM) the chain is on the cytoplasmic side. Position 512 is a phosphoserine (Ser-512). Positions 522–543 (PYQLIAQDNEPEKPVADSETKM) are disordered. A compositionally biased stretch (basic and acidic residues) spans 531–543 (EPEKPVADSETKM).

It belongs to the dicarboxylate/amino acid:cation symporter (DAACS) (TC 2.A.23) family. SLC1A3 subfamily. In terms of assembly, homotrimer. Post-translationally, glycosylated. Detected in brain, in Bergmann glia arborising into the molecular layer of the cerebellum (at protein level). Localized in brain and is highly enriched in the Purkinje cell layer in cerebellum. Intermediate level in lung, low level in spleen, skeletal muscle and testis.

Its subcellular location is the cell membrane. It carries out the reaction K(+)(in) + L-glutamate(out) + 3 Na(+)(out) + H(+)(out) = K(+)(out) + L-glutamate(in) + 3 Na(+)(in) + H(+)(in). The catalysed reaction is K(+)(in) + L-aspartate(out) + 3 Na(+)(out) + H(+)(out) = K(+)(out) + L-aspartate(in) + 3 Na(+)(in) + H(+)(in). It catalyses the reaction D-aspartate(out) + K(+)(in) + 3 Na(+)(out) + H(+)(out) = D-aspartate(in) + K(+)(out) + 3 Na(+)(in) + H(+)(in). Its function is as follows. Sodium-dependent, high-affinity amino acid transporter that mediates the uptake of L-glutamate and also L-aspartate and D-aspartate. Functions as a symporter that transports one amino acid molecule together with two or three Na(+) ions and one proton, in parallel with the counter-transport of one K(+) ion. Plays a redundant role in the rapid removal of released glutamate from the synaptic cleft, which is essential for terminating the postsynaptic action of glutamate. This Mus musculus (Mouse) protein is Excitatory amino acid transporter 1 (Slc1a3).